Here is a 366-residue protein sequence, read N- to C-terminus: Chorismate synthase (366 aa).

NADP(+) contacts are provided by Arg48 and Arg54. FMN contacts are provided by residues 125–127 (RSS), 238–239 (NA), Gly278, 293–297 (KPTSS), and Arg319.

This sequence belongs to the chorismate synthase family. Homotetramer. The cofactor is FMNH2.

The enzyme catalyses 5-O-(1-carboxyvinyl)-3-phosphoshikimate = chorismate + phosphate. It functions in the pathway metabolic intermediate biosynthesis; chorismate biosynthesis; chorismate from D-erythrose 4-phosphate and phosphoenolpyruvate: step 7/7. In terms of biological role, catalyzes the anti-1,4-elimination of the C-3 phosphate and the C-6 proR hydrogen from 5-enolpyruvylshikimate-3-phosphate (EPSP) to yield chorismate, which is the branch point compound that serves as the starting substrate for the three terminal pathways of aromatic amino acid biosynthesis. This reaction introduces a second double bond into the aromatic ring system. The chain is Chorismate synthase from Cellvibrio japonicus (strain Ueda107) (Pseudomonas fluorescens subsp. cellulosa).